We begin with the raw amino-acid sequence, 314 residues long: Ribosomal RNA small subunit methyltransferase H 2 (314 aa).

S-adenosyl-L-methionine-binding positions include 33–35 (AGH), aspartate 53, tyrosine 80, aspartate 101, and glutamine 108. The tract at residues 293–314 (KELEENSRSKSAKLRVFEKNDL) is disordered.

It belongs to the methyltransferase superfamily. RsmH family.

It is found in the cytoplasm. The catalysed reaction is cytidine(1402) in 16S rRNA + S-adenosyl-L-methionine = N(4)-methylcytidine(1402) in 16S rRNA + S-adenosyl-L-homocysteine + H(+). Its function is as follows. Specifically methylates the N4 position of cytidine in position 1402 (C1402) of 16S rRNA. The sequence is that of Ribosomal RNA small subunit methyltransferase H 2 from Agathobacter rectalis (strain ATCC 33656 / DSM 3377 / JCM 17463 / KCTC 5835 / VPI 0990) (Eubacterium rectale).